Reading from the N-terminus, the 431-residue chain is D-inositol 3-phosphate glycosyltransferase (431 aa).

Histidine 14 contributes to the 1D-myo-inositol 3-phosphate binding site. UDP-N-acetyl-alpha-D-glucosamine-binding positions include 20 to 21 and glycine 28; that span reads QP. 1D-myo-inositol 3-phosphate contacts are provided by residues 25–30, lysine 83, tyrosine 116, threonine 140, and arginine 160; that span reads DAGGMN. Residues arginine 240 and lysine 245 each coordinate UDP-N-acetyl-alpha-D-glucosamine. Mg(2+) contacts are provided by tyrosine 315, arginine 316, and alanine 318. 2 residues coordinate UDP-N-acetyl-alpha-D-glucosamine: glutamate 328 and glutamate 336. Threonine 342 is a binding site for Mg(2+).

The protein belongs to the glycosyltransferase group 1 family. MshA subfamily. In terms of assembly, homodimer.

The enzyme catalyses 1D-myo-inositol 3-phosphate + UDP-N-acetyl-alpha-D-glucosamine = 1D-myo-inositol 2-acetamido-2-deoxy-alpha-D-glucopyranoside 3-phosphate + UDP + H(+). Catalyzes the transfer of a N-acetyl-glucosamine moiety to 1D-myo-inositol 3-phosphate to produce 1D-myo-inositol 2-acetamido-2-deoxy-glucopyranoside 3-phosphate in the mycothiol biosynthesis pathway. In Thermomonospora curvata (strain ATCC 19995 / DSM 43183 / JCM 3096 / KCTC 9072 / NBRC 15933 / NCIMB 10081 / Henssen B9), this protein is D-inositol 3-phosphate glycosyltransferase.